The primary structure comprises 491 residues: Probable CtpA-like serine protease (491 aa).

A disordered region spans residues 1–22 (MSESKDTTEVNQEVNEKASSQS). Over residues 9–22 (EVNQEVNEKASSQS) the composition is skewed to polar residues. A helical transmembrane segment spans residues 34-54 (FIIILIVTILVTAMIAVFATI). The 83-residue stretch at 119–201 (TKSFNEDVSG…TKVTLTIERG (83 aa)) folds into the PDZ domain. Active-site charge relay system residues include Ser324, Asp335, and Lys349.

The protein belongs to the peptidase S41A family.

The protein localises to the cell membrane. The chain is Probable CtpA-like serine protease from Staphylococcus saprophyticus subsp. saprophyticus (strain ATCC 15305 / DSM 20229 / NCIMB 8711 / NCTC 7292 / S-41).